The chain runs to 281 residues: Peptidyl-prolyl cis-trans isomerase CYP28, chloroplastic (281 aa).

Residues 1–24 constitute a chloroplast transit peptide; sequence MASSSILIPPILTRRNLLLSTTIA. One can recognise a PPIase cyclophilin-type domain in the interval 66–268; it reads STTPCSDSTP…KTVFISGCGE (203 aa).

Belongs to the cyclophilin-type PPIase family. S-nytrosylated during the hypersensitive disease resistance response. As to expression, ubiquitous. Not detected in roots.

It is found in the plastid. The protein localises to the chloroplast. The enzyme catalyses [protein]-peptidylproline (omega=180) = [protein]-peptidylproline (omega=0). Functionally, PPIases accelerate the folding of proteins. It catalyzes the cis-trans isomerization of proline imidic peptide bonds in oligopeptides. This is Peptidyl-prolyl cis-trans isomerase CYP28, chloroplastic (CYP28) from Arabidopsis thaliana (Mouse-ear cress).